The following is a 148-amino-acid chain: FAD synthase (148 aa).

Residues 14-15 (VF), 19-22 (HVGH), and D100 each bind ATP.

Belongs to the archaeal FAD synthase family. As to quaternary structure, homodimer. The cofactor is a divalent metal cation.

It catalyses the reaction FMN + ATP + H(+) = FAD + diphosphate. It functions in the pathway cofactor biosynthesis; FAD biosynthesis; FAD from FMN: step 1/1. Its function is as follows. Catalyzes the transfer of the AMP portion of ATP to flavin mononucleotide (FMN) to produce flavin adenine dinucleotide (FAD) coenzyme. The sequence is that of FAD synthase from Pyrococcus abyssi (strain GE5 / Orsay).